Consider the following 203-residue polypeptide: dTTP/UTP pyrophosphatase (203 aa).

Residue Asp70 is the Proton acceptor of the active site.

The protein belongs to the Maf family. YhdE subfamily. A divalent metal cation serves as cofactor.

It is found in the cytoplasm. It catalyses the reaction dTTP + H2O = dTMP + diphosphate + H(+). The enzyme catalyses UTP + H2O = UMP + diphosphate + H(+). In terms of biological role, nucleoside triphosphate pyrophosphatase that hydrolyzes dTTP and UTP. May have a dual role in cell division arrest and in preventing the incorporation of modified nucleotides into cellular nucleic acids. The protein is dTTP/UTP pyrophosphatase (maf-1) of Pseudomonas putida (strain ATCC 47054 / DSM 6125 / CFBP 8728 / NCIMB 11950 / KT2440).